We begin with the raw amino-acid sequence, 393 residues long: RNA polymerase II holoenzyme cyclin-like subunit (393 aa).

Residues 51-146 (ICKRLNLRQR…LLEEMEFDMV (96 aa)) enclose the Cyclin N-terminal domain.

This sequence belongs to the cyclin family. Cyclin C subfamily. Component of the SRB8-11 complex, a regulatory module of the Mediator complex.

It is found in the nucleus. In terms of biological role, component of the SRB8-11 complex. The SRB8-11 complex is a regulatory module of the Mediator complex which is itself involved in regulation of basal and activated RNA polymerase II-dependent transcription. The SRB8-11 complex may be involved in the transcriptional repression of a subset of genes regulated by Mediator. It may inhibit the association of the Mediator complex with RNA polymerase II to form the holoenzyme complex. The SRB8-11 complex phosphorylates the C-terminal domain (CTD) of the largest subunit of RNA polymerase II. This Mycosarcoma maydis (Corn smut fungus) protein is RNA polymerase II holoenzyme cyclin-like subunit (SSN8).